Reading from the N-terminus, the 328-residue chain is Cell division protein ZipA (328 aa).

Topologically, residues 1–4 (MDLN) are periplasmic. A helical transmembrane segment spans residues 5-25 (TILIIVGIVALVALIVHGLWS). Residues 26-328 (NRREKSKYFD…NAEQAYLARV (303 aa)) are Cytoplasmic-facing. A disordered region spans residues 44-82 (SLTSRSHTQEEMVQPNNISPNTYVENGHTPISQPTTEKL). A compositionally biased stretch (polar residues) spans 57 to 81 (QPNNISPNTYVENGHTPISQPTTEK).

The protein belongs to the ZipA family. As to quaternary structure, interacts with FtsZ via their C-terminal domains.

It is found in the cell inner membrane. Its function is as follows. Essential cell division protein that stabilizes the FtsZ protofilaments by cross-linking them and that serves as a cytoplasmic membrane anchor for the Z ring. Also required for the recruitment to the septal ring of downstream cell division proteins. The chain is Cell division protein ZipA from Haemophilus influenzae (strain PittGG).